A 601-amino-acid polypeptide reads, in one-letter code: Peptide transporter PTR2 (601 aa).

Over residues 1–10 (MLNHPSQGSD) the composition is skewed to polar residues. The interval 1–66 (MLNHPSQGSD…DEDFEGPTEE (66 aa)) is disordered. Residues 1-150 (MLNHPSQGSD…PVFGGYVADT (150 aa)) are Extracellular-facing. Residues 14–28 (DEKQGDFPVIEEEKT) show a composition bias toward basic and acidic residues. The residue at position 37 (Y37) is a Phosphotyrosine. 2 positions are modified to phosphoserine: S39 and S45. Residues 42–53 (VANSTERYNLSP) show a composition bias toward polar residues. The span at 55–66 (PEDEDFEGPTEE) shows a compositional bias: acidic residues. Residues 151–172 (FWGKYNTICCGTAIYIAGIFIL) traverse the membrane as a helical segment. The Cytoplasmic portion of the chain corresponds to 173-182 (FITSIPSVGN). A helical membrane pass occupies residues 183 to 202 (RDSAIGGFIAAIILIGIATG). The Extracellular portion of the chain corresponds to 203–210 (MIKANLSV). Residues 211-229 (LIADQLPKRKPSIKVLKSG) form a helical membrane-spanning segment. Over 230–267 (ERVIVDSNITLQNVFMFFYFMINVGSLSLMATTELEYH) the chain is Cytoplasmic. A helical membrane pass occupies residues 268–287 (KGFWAAYLLPFCFFWIAVVT). Topologically, residues 288-294 (LIFGKKQ) are extracellular. A helical transmembrane segment spans residues 295–316 (YIQRPIGDKVIAKSFKVCWILT). At 317-378 (KNKFDFNAAK…ISSFITQASM (62 aa)) the chain is on the cytoplasmic side. A helical transmembrane segment spans residues 379-399 (MELHGIPNDFLQAFDSIALII). The Extracellular segment spans residues 400–412 (FIPIFEKFVYPFI). Residues 413–429 (RRYTPLKPITKIFFGFM) traverse the membrane as a helical segment. Topologically, residues 430-448 (FGSFAMTWAAVLQSFVYKA) are cytoplasmic. A helical membrane pass occupies residues 449-466 (GPWYNEPLGHNTPNHVHV). Over 467-494 (CWQIPAYVLISFSEIFASITGLEYAYSK) the chain is Extracellular. A helical transmembrane segment spans residues 495-513 (APASMKSFIMSIFLLTNAF). The Cytoplasmic segment spans residues 514–526 (GSAIGCALSPVTV). A helical transmembrane segment spans residues 527-547 (DPKFTWLFTGLAVACFISGCL). The Extracellular portion of the chain corresponds to 548-554 (FWLCFRK). A helical transmembrane segment spans residues 555–577 (YNDTEEEMNAMDYEEEDEFDLNP). At 578-601 (ISAPKANDIEILEPMESLRSTTKY) the chain is on the cytoplasmic side. S594 carries the post-translational modification Phosphoserine.

This sequence belongs to the major facilitator superfamily. Proton-dependent oligopeptide transporter (POT/PTR) (TC 2.A.17) family.

Its subcellular location is the membrane. Its function is as follows. Uptake of small peptides. In Saccharomyces cerevisiae (strain ATCC 204508 / S288c) (Baker's yeast), this protein is Peptide transporter PTR2 (PTR2).